The sequence spans 41 residues: Large ribosomal subunit protein bL36 (41 aa).

Belongs to the bacterial ribosomal protein bL36 family.

This is Large ribosomal subunit protein bL36 from Beijerinckia indica subsp. indica (strain ATCC 9039 / DSM 1715 / NCIMB 8712).